A 182-amino-acid polypeptide reads, in one-letter code: Neuropeptide CCHamide-1 (182 aa).

An N-terminal signal peptide occupies residues 1–22 (MWYSKCSWTLVVLVALFALVTG). Cys-24 and Cys-31 are disulfide-bonded. The residue at position 35 (His-35) is a Histidine amide. A propeptide spanning residues 39–182 (SGGKAVIDAK…ENYSGYELTK (144 aa)) is cleaved from the precursor. 2 disordered regions span residues 67 to 103 (NNNN…AAPA) and 133 to 154 (QLQD…DAAA). The span at 87 to 103 (RNTNANSANNIPLAAPA) shows a compositional bias: low complexity. Asn-174 carries N-linked (GlcNAc...) asparagine glycosylation.

As to expression, expressed in endocrine cells of the larval midgut (at protein level). In the brain, expressed in the optic lobes, lateral protocerebrum, subesophageal ganglion, and intermediate and superior medial protocerebrum (at protein level). Expressed in DN1a neurons but not in other clock neurons and expression follows a rhythmic pattern controlled by the circadian clock (at protein level). In the posterior midgut, expressed in enteroendocrine cells (at protein level). Low levels in larval brain with higher levels in larval and adult gut and adult brain.

It localises to the secreted. Its function is as follows. Neuropeptide ligand for the CCHamide-1 receptor CCHa1-R. Neuromessenger mediating signaling between neuronal cells of the circadian clock network involved in regulation of sleep latency (the time required to fall asleep), amount of sleep and depth of sleep (arousability). Together with PDF, involved in regulating intensity and periodicity of daytime activity. In subsets of clock neurons modulates the rhythmic expression of PDP1 and PDF, and together with PDF modulates the rhythmic expression of circadian protein PER/period, but not TIM/timeless. Mediates signaling from DN1a (anterior dorsal neurons 1) clock neurons to s-LNv (small ventral lateral neurons) clock neurons through CCHa1-R, contributing to regulation of activity rhythms by the circadian clock, particularly in the morning. May be involved in signaling between clock neurons and non-clock neurons, such as the fan-shaped body, involved in sleep homeostasis. In response to a high protein diet mediates hormonal signaling between the gut and a CCHa1-R expressing subset of dopaminergic cells in the protocerebral anterior medial (PAM) cluster of the brain. This suppresses arousability by mechano-sensory stimulation (but not thermal stimulation) but is not involved in regulation of sleep patterns. The polypeptide is Neuropeptide CCHamide-1 (Drosophila melanogaster (Fruit fly)).